Reading from the N-terminus, the 214-residue chain is Thymidylate kinase (214 aa).

10 to 17 (GGEGVGKT) contacts ATP.

Belongs to the thymidylate kinase family.

It carries out the reaction dTMP + ATP = dTDP + ADP. In terms of biological role, phosphorylation of dTMP to form dTDP in both de novo and salvage pathways of dTTP synthesis. In Bartonella quintana (strain Toulouse) (Rochalimaea quintana), this protein is Thymidylate kinase.